The chain runs to 348 residues: MSLVSVHNEWDPLEEIIVGTAVGARVPRADRSVFAVEYADEYDSQDQVPAGPYPDRVLKETEEELHVLSEELTKLGVTVRRPGQRDNSALVATPDWQTDGFHDYCPRDGLLAVGQTVIESPMALRARFLESLAYKDILLEYFASGARWLSAPKPRLADEMYEPTAPAGQRLTDLEPVFDAANVLRFGTDLLYLVSDSGNELGAKWLQSALGSTYKVHPCRGLYASTHVDSTIVPLRPGLVLVNPARVNDDNMPDFLRSWQTVVCPELVDIGFTGDKPHCSVWIGMNLLVVRPDLAVVDRRQTGLIKVLEKHGVDVLPLQLTHSRTLGGGFHCATLDVRRTGSLETYRF.

Catalysis depends on residues aspartate 179 and histidine 227. Cysteine 332 acts as the Amidino-cysteine intermediate in catalysis.

This sequence belongs to the amidinotransferase family. As to quaternary structure, homodimer.

It carries out the reaction 1-amino-1-deoxy-scyllo-inositol 4-phosphate + L-arginine = 1-guanidino-1-deoxy-scyllo-inositol 4-phosphate + L-ornithine. The protein operates within antibiotic biosynthesis; streptomycin biosynthesis. Its function is as follows. Catalyzes two non-consecutive transamidination reactions. It converts scyllo-inosamine 4-phosphate into N-amidino-scyllo-inosamine 4-phosphate and N1-amidinostreptamine 6-phosphate into streptidine 6-phosphate. The sequence is that of Inosamine-phosphate amidinotransferase 1 (strB1) from Streptomyces glaucescens.